A 312-amino-acid chain; its full sequence is MEPGNYTVVTEFILLGLTDDITVSVILFVMFLIVYSVTLMGNLNIIVLIRTSPQLHTPMYLFLSHLAFLDIGYSSSVTPIMLRGFLRKGTFIPVAGCVAQLCIVVAFGTSESFLLASMAYDRYVAICSPLLYSTQMSSTVCILLVGTSYLGGWVNAWIFTGCSLNLSFCGPNKINHFFCDYSPLLKLSCSHDFSFEVIPAISSGSIIVVTVFIIALSYVYILVSILKMRSTEGRQKAFSTCTSHLTAVTLFFGTITFIYVMPQSSYSTDQNKVVSVFYTVVIPMLNPLIYSFRNKEVKEAMKKLIAKTHWWS.

The Extracellular portion of the chain corresponds to 1–25 (MEPGNYTVVTEFILLGLTDDITVSV). A glycan (N-linked (GlcNAc...) asparagine) is linked at Asn-5. The chain crosses the membrane as a helical span at residues 26 to 46 (ILFVMFLIVYSVTLMGNLNII). Residues 47-54 (VLIRTSPQ) lie on the Cytoplasmic side of the membrane. The helical transmembrane segment at 55–75 (LHTPMYLFLSHLAFLDIGYSS) threads the bilayer. Residues 76 to 99 (SVTPIMLRGFLRKGTFIPVAGCVA) are Extracellular-facing. An intrachain disulfide couples Cys-97 to Cys-189. Residues 100-120 (QLCIVVAFGTSESFLLASMAY) traverse the membrane as a helical segment. The Cytoplasmic portion of the chain corresponds to 121–133 (DRYVAICSPLLYS). The helical transmembrane segment at 134–154 (TQMSSTVCILLVGTSYLGGWV) threads the bilayer. The Extracellular portion of the chain corresponds to 155 to 196 (NAWIFTGCSLNLSFCGPNKINHFFCDYSPLLKLSCSHDFSFE). An N-linked (GlcNAc...) asparagine glycan is attached at Asn-165. A helical transmembrane segment spans residues 197 to 217 (VIPAISSGSIIVVTVFIIALS). Residues 218–237 (YVYILVSILKMRSTEGRQKA) lie on the Cytoplasmic side of the membrane. The chain crosses the membrane as a helical span at residues 238 to 258 (FSTCTSHLTAVTLFFGTITFI). Over 259–271 (YVMPQSSYSTDQN) the chain is Extracellular. A helical transmembrane segment spans residues 272-292 (KVVSVFYTVVIPMLNPLIYSF). Topologically, residues 293 to 312 (RNKEVKEAMKKLIAKTHWWS) are cytoplasmic.

The protein belongs to the G-protein coupled receptor 1 family.

Its subcellular location is the cell membrane. Its function is as follows. Probable odorant receptor, which recognizes only aliphatic alcohols, suggesting that it may convey a 'woody' or 'sweet' sour. This Mus musculus (Mouse) protein is Olfactory receptor 5p57.